A 539-amino-acid chain; its full sequence is Glycerol kinase (539 aa).

T49 contacts ADP. ATP is bound by residues T49, T50, and S51. T49 contacts sn-glycerol 3-phosphate. An ADP-binding site is contributed by R53. 4 residues coordinate sn-glycerol 3-phosphate: R119, E120, Y171, and D280. Residues R119, E120, Y171, D280, and Q281 each contribute to the glycerol site. ADP-binding residues include T302 and G345. 4 residues coordinate ATP: T302, G345, Q349, and G446. ADP-binding residues include G446 and N450.

This sequence belongs to the FGGY kinase family.

The enzyme catalyses glycerol + ATP = sn-glycerol 3-phosphate + ADP + H(+). It functions in the pathway polyol metabolism; glycerol degradation via glycerol kinase pathway; sn-glycerol 3-phosphate from glycerol: step 1/1. With respect to regulation, inhibited by fructose 1,6-bisphosphate (FBP). Functionally, key enzyme in the regulation of glycerol uptake and metabolism. Catalyzes the phosphorylation of glycerol to yield sn-glycerol 3-phosphate. The polypeptide is Glycerol kinase (Rhodopirellula baltica (strain DSM 10527 / NCIMB 13988 / SH1)).